A 336-amino-acid chain; its full sequence is Holliday junction branch migration complex subunit RuvB (336 aa).

The segment at 4 to 184 is large ATPase domain (RuvB-L); that stretch reads ADRLIQPQVQ…FGIPLRLEFY (181 aa). ATP-binding positions include R24, G65, K68, T69, T70, 131–133, R174, Y184, and R221; that span reads EDY. T69 lines the Mg(2+) pocket. Residues 185 to 255 form a small ATPAse domain (RuvB-S) region; that stretch reads NVADLTTIVT…VAEYALDLLD (71 aa). The interval 258–336 is head domain (RuvB-H); sequence DQGFDYLDRK…HFSLVRPEKA (79 aa). DNA-binding residues include R294, R313, and R318.

The protein belongs to the RuvB family. Homohexamer. Forms an RuvA(8)-RuvB(12)-Holliday junction (HJ) complex. HJ DNA is sandwiched between 2 RuvA tetramers; dsDNA enters through RuvA and exits via RuvB. An RuvB hexamer assembles on each DNA strand where it exits the tetramer. Each RuvB hexamer is contacted by two RuvA subunits (via domain III) on 2 adjacent RuvB subunits; this complex drives branch migration. In the full resolvosome a probable DNA-RuvA(4)-RuvB(12)-RuvC(2) complex forms which resolves the HJ.

Its subcellular location is the cytoplasm. The catalysed reaction is ATP + H2O = ADP + phosphate + H(+). Functionally, the RuvA-RuvB-RuvC complex processes Holliday junction (HJ) DNA during genetic recombination and DNA repair, while the RuvA-RuvB complex plays an important role in the rescue of blocked DNA replication forks via replication fork reversal (RFR). RuvA specifically binds to HJ cruciform DNA, conferring on it an open structure. The RuvB hexamer acts as an ATP-dependent pump, pulling dsDNA into and through the RuvAB complex. RuvB forms 2 homohexamers on either side of HJ DNA bound by 1 or 2 RuvA tetramers; 4 subunits per hexamer contact DNA at a time. Coordinated motions by a converter formed by DNA-disengaged RuvB subunits stimulates ATP hydrolysis and nucleotide exchange. Immobilization of the converter enables RuvB to convert the ATP-contained energy into a lever motion, pulling 2 nucleotides of DNA out of the RuvA tetramer per ATP hydrolyzed, thus driving DNA branch migration. The RuvB motors rotate together with the DNA substrate, which together with the progressing nucleotide cycle form the mechanistic basis for DNA recombination by continuous HJ branch migration. Branch migration allows RuvC to scan DNA until it finds its consensus sequence, where it cleaves and resolves cruciform DNA. In Shewanella frigidimarina (strain NCIMB 400), this protein is Holliday junction branch migration complex subunit RuvB.